A 2801-amino-acid chain; its full sequence is Neurobeachin-like protein 2 (2801 aa).

The tract at residues 1379-1529 (RHEEEYEEEE…TISNTSNPQA (151 aa)) is disordered. Positions 1383–1393 (EYEEEEGETQD) are enriched in acidic residues. Composition is skewed to polar residues over residues 1400–1413 (DLSQ…QLKN), 1424–1437 (GDQS…SNTV), 1470–1481 (KGPQTPVGSQPE), and 1500–1528 (SSSL…SNPQ). Positions 1986-2086 (SQKEKLVLSE…VRNKVYSRIL (101 aa)) constitute a BEACH-type PH domain. In terms of domain architecture, BEACH spans 2099–2391 (RSPQELLKAS…QLLKEPHPPR (293 aa)). 7 WD repeats span residues 2431–2468 (LVQA…SWLP), 2492–2535 (RFLS…MLGK), 2538–2575 (LVGR…VWQV), 2588–2626 (RPIQ…VHSV), 2633–2676 (WTLR…RYAL), 2684–2719 (TLLA…IRDL), and 2727–2762 (APLA…VGAG).

This sequence belongs to the WD repeat neurobeachin family.

It localises to the endoplasmic reticulum. In terms of biological role, involved in thrombopoiesis. Plays a role in the development or secretion of alpha-granules, that contain several growth factors important for platelet biogenesis. This Danio rerio (Zebrafish) protein is Neurobeachin-like protein 2 (nbeal2).